A 308-amino-acid chain; its full sequence is UPF0282 protein M1425_2116 (308 aa).

It belongs to the UPF0282 family.

In Saccharolobus islandicus (strain M.14.25 / Kamchatka #1) (Sulfolobus islandicus), this protein is UPF0282 protein M1425_2116.